Consider the following 472-residue polypeptide: Cysteine--tRNA ligase (472 aa).

Cys28 lines the Zn(2+) pocket. Positions Pro30–His40 match the 'HIGH' region motif. Cys207, His232, and Glu236 together coordinate Zn(2+). The short motif at Lys264–Ser268 is the 'KMSKS' region element. Lys267 provides a ligand contact to ATP.

The protein belongs to the class-I aminoacyl-tRNA synthetase family. The cofactor is Zn(2+).

The protein resides in the cytoplasm. It carries out the reaction tRNA(Cys) + L-cysteine + ATP = L-cysteinyl-tRNA(Cys) + AMP + diphosphate. The chain is Cysteine--tRNA ligase (cysS) from Aeropyrum pernix (strain ATCC 700893 / DSM 11879 / JCM 9820 / NBRC 100138 / K1).